The following is a 1085-amino-acid chain: MKLTKGCAYKYIIFTVLILANILYDNKKRCMIKKNLRISSCGIISRLLKSNSNYNSFNKNYNFTSAISELQFSNFWNLDILQKDIFSNIHNNKNKPQSYIIHKRLMSEKGDNNNNNHQNNNGNDNKKRLGSVVNNEENTCSDKRMKPFEEGHGITQVDKMNNNSDHLQQNGVMNLNSNNVENNNNNNSVVVKKNEPKIHYRKDYKPSGFIINNVTLNINIHDNETIVRSVLDMDISKHNVGEDLVFDGVGLKINEISINNKKLVEGEEYTYDNEFLTIFSKFVPKSKFAFSSEVIIHPETNYALTGLYKSKNIIVSQCEATGFRRITFFIDRPDMMAKYDVTVTADKEKYPVLLSNGDKVNEFEIPGGRHGARFNDPHLKPCYLFAVVAGDLKHLSATYITKYTKKKVELYVFSEEKYVSKLQWALECLKKSMAFDEDYFGLEYDLSRLNLVAVSDFNVGAMENKGLNIFNANSLLASKKNSIDFSYARILTVVGHEYFHNYTGNRVTLRDWFQLTLKEGLTVHRENLFSEEMTKTVTTRLSHVDLLRSVQFLEDSSPLSHPIRPESYVSMENFYTTTVYDKGSEVMRMYLTILGEEYYKKGFDIYIKKNDGNTATCEDFNYAMEQAYKMKKADNSANLNQYLLWFSQSGTPHVSFKYNYDAEKKQYSIHVNQYTKPDENQKEKKPLFIPISVGLINPENGKEMISQTTLELTKESDTFVFNNIAVKPIPSLFRGFSAPVYIEDNLTDEERILLLKYDSDAFVRYNSCTNIYMKQILMNYNEFLKAKNEKLESFNLTPVNAQFIDAIKYLLEDPHADAGFKSYIVSLPQDRYIINFVSNLDTDVLADTKEYIYKQIGDKLNDVYYKMFKSLEAKADDLTYFNDESHVDFDQMNMRTLRNTLLSLLSKAQYPNILNEIIEHSKSPYPSNWLTSLSVSAYFDKYFELYDKTYKLSKDDELLLQEWLKTVSRSDRKDIYEILKKLENEVLKDSKNPNDIRAVYLPFTNNLRRFHDISGKGYKLIAEVITKTDKFNPMVATQLCEPFKLWNKLDTKRQELMLNEMNTMLQEPNISNNLKEYLLRLTNKL.

The segment at residues 1–30 (MKLTKGCAYKYIIFTVLILANILYDNKKRC) is a signal peptide (required for ER targeting and membrane association; not cleaved). The tract at residues 1–200 (MKLTKGCAYK…VKKNEPKIHY (200 aa)) is sufficient for targeting to the food vacuole. The tract at residues 108–130 (EKGDNNNNNHQNNNGNDNKKRLG) is disordered. Residues 112–123 (NNNNNHQNNNGN) show a composition bias toward low complexity. A peptide-binding residues include Glu319, Gly460, Ala461, and Glu463. Position 496 (His496) interacts with Zn(2+). Glu497 functions as the Proton acceptor in the catalytic mechanism. His500 and Glu519 together coordinate Zn(2+).

It belongs to the peptidase M1 family. Heterodimer of the p68 form and the p35 form which are derived from the p120 precursor. Requires Zn(2+) as cofactor. In terms of processing, the full length protein appears to be cleaved into a 120 kDa precursor. This precursor is then proteolytically cleaved at the N-terminus generating a 96 kDa form which is further processed at the C-terminus into 68 kDa and 35 kDa forms that remain associated.

The protein localises to the parasitophorous vacuole membrane. It localises to the nucleus. The protein resides in the cytoplasm. It is found in the vacuole lumen. With respect to regulation, inhibited by 1,10-phenanthroline, EDTA and bestatin. Inhibited by (Benzyl)Tyr-Ala (BTA). Activity is not affected by phosphoramidin, PMSF, leupeptin, iodoacetamide or pepstatin. In terms of biological role, displays aminopeptidase activity with a broad substrate specificity. Preferentially, cleaves after Leu and Met, but also cleaves after Ala and Arg. Low activity towards Lys, Phe, Tyr, Trp, Gln, Ser and Gly and negligible activity towards Glu, Asp, Pro, Ile, Thr, Val, His and Asn. Has dipeptidase activity. Plays a role in the terminal stages of host hemoglobin digestion by cleaving the N-terminal residue of small hemoglobin-derived oligopeptides. This chain is Aminopeptidase N, found in Plasmodium falciparum (isolate 3D7).